A 276-amino-acid chain; its full sequence is Large ribosomal subunit protein uL2 (276 aa).

Disordered regions lie at residues 1–20 (MGIK…TTND) and 219–276 (TVRG…RRKK). A compositionally biased stretch (polar residues) spans 7–20 (NPTTNGRRNMTTND).

This sequence belongs to the universal ribosomal protein uL2 family. As to quaternary structure, part of the 50S ribosomal subunit. Forms a bridge to the 30S subunit in the 70S ribosome.

Functionally, one of the primary rRNA binding proteins. Required for association of the 30S and 50S subunits to form the 70S ribosome, for tRNA binding and peptide bond formation. It has been suggested to have peptidyltransferase activity; this is somewhat controversial. Makes several contacts with the 16S rRNA in the 70S ribosome. The chain is Large ribosomal subunit protein uL2 from Bacillus cereus (strain Q1).